Reading from the N-terminus, the 210-residue chain is Na(+)-translocating NADH-quinone reductase subunit D (210 aa).

5 helical membrane-spanning segments follow: residues Phe42–Ile62, Ile72–Ala92, Val103–Met123, Phe131–Val151, and Asn178–Val198.

The protein belongs to the NqrDE/RnfAE family. Composed of six subunits; NqrA, NqrB, NqrC, NqrD, NqrE and NqrF.

The protein resides in the cell inner membrane. The enzyme catalyses a ubiquinone + n Na(+)(in) + NADH + H(+) = a ubiquinol + n Na(+)(out) + NAD(+). In terms of biological role, NQR complex catalyzes the reduction of ubiquinone-1 to ubiquinol by two successive reactions, coupled with the transport of Na(+) ions from the cytoplasm to the periplasm. NqrA to NqrE are probably involved in the second step, the conversion of ubisemiquinone to ubiquinol. The chain is Na(+)-translocating NADH-quinone reductase subunit D from Aeromonas hydrophila subsp. hydrophila (strain ATCC 7966 / DSM 30187 / BCRC 13018 / CCUG 14551 / JCM 1027 / KCTC 2358 / NCIMB 9240 / NCTC 8049).